The following is a 375-amino-acid chain: Platelet-derived growth factor receptor-like protein (375 aa).

The signal sequence occupies residues 1 to 17; sequence MKVWLLLGLLLLHEALG. The tract at residues 19-63 is disordered; sequence VAGQHPPKNKRPKEQGENRIKPTNKKAKPKIPKIKDRDTADSAPK. Over residues 40-50 the composition is skewed to basic residues; sequence PTNKKAKPKIP. Residues 62-159 enclose the Ig-like C2-type 1 domain; sequence PKSQSIMMQA…GYICRRDEAR (98 aa). Cys-96 and Cys-143 are oxidised to a cystine. Asn-219 is a glycosylation site (N-linked (GlcNAc...) asparagine). An Ig-like C2-type 2 domain is found at 272-375; sequence PSTTILASSN…TTVATTVEFS (104 aa). Cys-293 and Cys-357 are joined by a disulfide.

As to quaternary structure, forms a complex composed of PDGFRL, TNK2 and GRB2.

Its subcellular location is the secreted. This chain is Platelet-derived growth factor receptor-like protein (Pdgfrl), found in Rattus norvegicus (Rat).